A 167-amino-acid chain; its full sequence is Translationally-controlled tumor protein homolog (167 aa).

The TCTP domain occupies 1-167 (MLIFEDVISG…WKHGVKENKI (167 aa)).

Belongs to the TCTP family.

Its subcellular location is the cytoplasm. It localises to the cytoskeleton. Its function is as follows. Involved in protein synthesis. Involved in microtubule stabilization. The protein is Translationally-controlled tumor protein homolog (TMA19) of Candida albicans (strain SC5314 / ATCC MYA-2876) (Yeast).